Here is a 346-residue protein sequence, read N- to C-terminus: Holliday junction branch migration complex subunit RuvB (346 aa).

Residues 1-182 (MSERLVTSNE…FGVLCSMEYY (182 aa)) are large ATPase domain (RuvB-L). ATP-binding positions include L21, R22, G63, K66, T67, T68, 129 to 131 (EDY), R172, Y182, and R219. T67 serves as a coordination point for Mg(2+). A small ATPAse domain (RuvB-S) region spans residues 183–253 (TDEQLKEIII…AAKKSLEILE (71 aa)). Positions 256–346 (GEGFDRIDNK…DSKQCTLFEK (91 aa)) are head domain (RuvB-H). Residues R311 and R316 each contribute to the DNA site.

This sequence belongs to the RuvB family. Homohexamer. Forms an RuvA(8)-RuvB(12)-Holliday junction (HJ) complex. HJ DNA is sandwiched between 2 RuvA tetramers; dsDNA enters through RuvA and exits via RuvB. An RuvB hexamer assembles on each DNA strand where it exits the tetramer. Each RuvB hexamer is contacted by two RuvA subunits (via domain III) on 2 adjacent RuvB subunits; this complex drives branch migration. In the full resolvosome a probable DNA-RuvA(4)-RuvB(12)-RuvC(2) complex forms which resolves the HJ.

The protein resides in the cytoplasm. It catalyses the reaction ATP + H2O = ADP + phosphate + H(+). Its function is as follows. The RuvA-RuvB-RuvC complex processes Holliday junction (HJ) DNA during genetic recombination and DNA repair, while the RuvA-RuvB complex plays an important role in the rescue of blocked DNA replication forks via replication fork reversal (RFR). RuvA specifically binds to HJ cruciform DNA, conferring on it an open structure. The RuvB hexamer acts as an ATP-dependent pump, pulling dsDNA into and through the RuvAB complex. RuvB forms 2 homohexamers on either side of HJ DNA bound by 1 or 2 RuvA tetramers; 4 subunits per hexamer contact DNA at a time. Coordinated motions by a converter formed by DNA-disengaged RuvB subunits stimulates ATP hydrolysis and nucleotide exchange. Immobilization of the converter enables RuvB to convert the ATP-contained energy into a lever motion, pulling 2 nucleotides of DNA out of the RuvA tetramer per ATP hydrolyzed, thus driving DNA branch migration. The RuvB motors rotate together with the DNA substrate, which together with the progressing nucleotide cycle form the mechanistic basis for DNA recombination by continuous HJ branch migration. Branch migration allows RuvC to scan DNA until it finds its consensus sequence, where it cleaves and resolves cruciform DNA. In Clostridium perfringens (strain ATCC 13124 / DSM 756 / JCM 1290 / NCIMB 6125 / NCTC 8237 / Type A), this protein is Holliday junction branch migration complex subunit RuvB.